The sequence spans 96 residues: (4S)-4-hydroxy-5-phosphonooxypentane-2,3-dione isomerase (96 aa).

An ABM domain is found at 2–91 (HVTLVEINVH…MTGPRKKRLF (90 aa)).

Belongs to the LsrG family. Homodimer.

The protein resides in the cytoplasm. The enzyme catalyses (2S)-2-hydroxy-3,4-dioxopentyl phosphate = 3-hydroxy-2,4-dioxopentyl phosphate. Involved in the degradation of phospho-AI-2, thereby terminating induction of the lsr operon and closing the AI-2 signaling cycle. Catalyzes the conversion of (4S)-4-hydroxy-5-phosphonooxypentane-2,3-dione (P-DPD) to 3-hydroxy-5-phosphonooxypentane-2,4-dione (P-HPD). The polypeptide is (4S)-4-hydroxy-5-phosphonooxypentane-2,3-dione isomerase (Escherichia coli O157:H7).